The following is a 212-amino-acid chain: Large ribosomal subunit protein uL3 (212 aa).

An N5-methylglutamine modification is found at Gln153.

The protein belongs to the universal ribosomal protein uL3 family. In terms of assembly, part of the 50S ribosomal subunit. Forms a cluster with proteins L14 and L19. Methylated by PrmB.

One of the primary rRNA binding proteins, it binds directly near the 3'-end of the 23S rRNA, where it nucleates assembly of the 50S subunit. The sequence is that of Large ribosomal subunit protein uL3 from Shewanella halifaxensis (strain HAW-EB4).